The following is a 53-amino-acid chain: Small, acid-soluble spore protein K (53 aa).

The tract at residues 1 to 53 (MRNKEHNFPNQNNNKFEGEPRAKSEYASKRADGTTNTHPQERMRASGERSDFF) is disordered. 2 stretches are compositionally biased toward basic and acidic residues: residues 16-32 (FEGE…KRAD) and 39-53 (PQER…SDFF).

This sequence belongs to the SspK family.

Its subcellular location is the spore core. This chain is Small, acid-soluble spore protein K, found in Geobacillus thermodenitrificans (strain NG80-2).